The sequence spans 152 residues: Protein SprT-like (152 aa).

The SprT-like domain maps to 9–149; the sequence is LQKLTETISL…CGKCNGKLKE (141 aa). Residue His-70 coordinates Zn(2+). Residue Glu-71 is part of the active site. Zn(2+) is bound at residue His-74.

The protein belongs to the SprT family. Requires Zn(2+) as cofactor.

It is found in the cytoplasm. This chain is Protein SprT-like, found in Staphylococcus saprophyticus subsp. saprophyticus (strain ATCC 15305 / DSM 20229 / NCIMB 8711 / NCTC 7292 / S-41).